The chain runs to 434 residues: CinA-like protein (434 aa).

The protein belongs to the CinA family.

In Mycolicibacterium paratuberculosis (strain ATCC BAA-968 / K-10) (Mycobacterium paratuberculosis), this protein is CinA-like protein.